Reading from the N-terminus, the 359-residue chain is Protein RecA (359 aa).

64–71 (GHESSGKT) serves as a coordination point for ATP. The tract at residues 329–359 (KYSNKDSNDSPKEGSKIKTKVNPAVTQDELI) is disordered. The segment covering 331-344 (SNKDSNDSPKEGSK) has biased composition (basic and acidic residues).

It belongs to the RecA family.

The protein localises to the cytoplasm. Can catalyze the hydrolysis of ATP in the presence of single-stranded DNA, the ATP-dependent uptake of single-stranded DNA by duplex DNA, and the ATP-dependent hybridization of homologous single-stranded DNAs. It interacts with LexA causing its activation and leading to its autocatalytic cleavage. The polypeptide is Protein RecA (Francisella tularensis subsp. tularensis (strain FSC 198)).